The primary structure comprises 371 residues: Histidinol-phosphate aminotransferase 2 (371 aa).

Lys232 carries the post-translational modification N6-(pyridoxal phosphate)lysine.

It belongs to the class-II pyridoxal-phosphate-dependent aminotransferase family. Histidinol-phosphate aminotransferase subfamily. As to quaternary structure, homodimer. It depends on pyridoxal 5'-phosphate as a cofactor.

It catalyses the reaction L-histidinol phosphate + 2-oxoglutarate = 3-(imidazol-4-yl)-2-oxopropyl phosphate + L-glutamate. It functions in the pathway amino-acid biosynthesis; L-histidine biosynthesis; L-histidine from 5-phospho-alpha-D-ribose 1-diphosphate: step 7/9. This is Histidinol-phosphate aminotransferase 2 from Methylococcus capsulatus (strain ATCC 33009 / NCIMB 11132 / Bath).